A 212-amino-acid chain; its full sequence is Octanoyltransferase (212 aa).

The BPL/LPL catalytic domain occupies 31–209; sequence AETQDEIWLV…HFADLLGYNI (179 aa). Residues 70 to 77, 138 to 140, and 151 to 153 contribute to the substrate site; these read RGGQITYH, SLG, and GLA. The active-site Acyl-thioester intermediate is the cysteine 169.

This sequence belongs to the LipB family.

The protein resides in the cytoplasm. It carries out the reaction octanoyl-[ACP] + L-lysyl-[protein] = N(6)-octanoyl-L-lysyl-[protein] + holo-[ACP] + H(+). It participates in protein modification; protein lipoylation via endogenous pathway; protein N(6)-(lipoyl)lysine from octanoyl-[acyl-carrier-protein]: step 1/2. Its function is as follows. Catalyzes the transfer of endogenously produced octanoic acid from octanoyl-acyl-carrier-protein onto the lipoyl domains of lipoate-dependent enzymes. Lipoyl-ACP can also act as a substrate although octanoyl-ACP is likely to be the physiological substrate. The polypeptide is Octanoyltransferase (Haemophilus influenzae (strain PittGG)).